We begin with the raw amino-acid sequence, 537 residues long: Eukaryotic translation initiation factor 3 subunit L (537 aa).

The segment covering 1-19 has biased composition (basic and acidic residues); sequence MSRRVEFDLSTEDHSDRRR. Residues 1–30 form a disordered region; that stretch reads MSRRVEFDLSTEDHSDRRRTNTFSSSADED. Residues 299-487 enclose the PCI domain; that stretch reads EATKMFVNCL…GPSSADDDEP (189 aa).

This sequence belongs to the eIF-3 subunit L family. In terms of assembly, component of the eukaryotic translation initiation factor 3 (eIF-3) complex.

Its subcellular location is the cytoplasm. Component of the eukaryotic translation initiation factor 3 (eIF-3) complex, which is involved in protein synthesis of a specialized repertoire of mRNAs and, together with other initiation factors, stimulates binding of mRNA and methionyl-tRNAi to the 40S ribosome. The eIF-3 complex specifically targets and initiates translation of a subset of mRNAs involved in cell proliferation. This chain is Eukaryotic translation initiation factor 3 subunit L, found in Caenorhabditis elegans.